An 85-amino-acid polypeptide reads, in one-letter code: uncharacterized protein (85 aa).

The tract at residues 35–85 is disordered; sequence SDKDAPFSTQALTRSKSKRKRSALPVANGLKKPTRSIKRPSRGERLSATTI.

This is an uncharacterized protein from Pasteurella multocida (strain Pm70).